The following is a 720-amino-acid chain: Inactive serine protease PAMR1 (720 aa).

The N-terminal stretch at 1–21 (MELGWWPQLGLAFLQLLLISS) is a signal peptide. 8 disulfide bridges follow: C128–C150, C177–C199, C239–C250, C244–C260, C262–C271, C280–C329, C315–C342, and C414–C442. A CUB domain is found at 128–236 (CGQVLRVPKG…DGFHAIFEEI (109 aa)). The EGF-like domain maps to 235-272 (EITACSSSPCFHDGTCLLDSTGSYKCACLAGYTGKHCE). Sushi domains are found at residues 278 to 344 (RNCS…ICIK) and 387 to 444 (APTK…SCIP). Residues 445–720 (ICGKTENVSA…FKDWIERNMK (276 aa)) form the Peptidase S1 domain. N-linked (GlcNAc...) asparagine glycosylation occurs at N451. 3 cysteine pairs are disulfide-bonded: C489-C505, C630-C649, and C661-C697.

Belongs to the peptidase S1 family.

The protein localises to the secreted. In terms of biological role, may play a role in regeneration of skeletal muscle. This chain is Inactive serine protease PAMR1 (PAMR1), found in Bos taurus (Bovine).